A 354-amino-acid chain; its full sequence is Ribosomal RNA large subunit methyltransferase M (354 aa).

S-adenosyl-L-methionine-binding positions include S183, 216-219 (SPGG), D235, D255, and D271. The active-site Proton acceptor is the K300.

Belongs to the class I-like SAM-binding methyltransferase superfamily. RNA methyltransferase RlmE family. RlmM subfamily. Monomer.

It is found in the cytoplasm. The enzyme catalyses cytidine(2498) in 23S rRNA + S-adenosyl-L-methionine = 2'-O-methylcytidine(2498) in 23S rRNA + S-adenosyl-L-homocysteine + H(+). Its function is as follows. Catalyzes the 2'-O-methylation at nucleotide C2498 in 23S rRNA. This chain is Ribosomal RNA large subunit methyltransferase M, found in Pseudomonas putida (strain ATCC 700007 / DSM 6899 / JCM 31910 / BCRC 17059 / LMG 24140 / F1).